The primary structure comprises 252 residues: Autophagy-related protein 27 (252 aa).

Residues 1 to 15 (MILASLLTFATAALA) form the signal peptide. Residues 16–161 (FDCSDKELER…SMKTKAACIT (146 aa)) form the MRH domain. Residues 16 to 176 (FDCSDKELER…KKEKHDNGES (161 aa)) are Lumenal-facing. Cystine bridges form between Cys-18–Cys-57, Cys-66–Cys-73, and Cys-130–Cys-159. Asn-49 is a glycosylation site (N-linked (GlcNAc...) asparagine). A helical membrane pass occupies residues 177–197 (WGWFTWIFIFLVLFLSIYIIG). Topologically, residues 198–252 (GAWFQYNKGNAIDFQSALKEVVENFIELLKGLPSFGKEIIEKFTGRSNRGEYSAV) are cytoplasmic.

It belongs to the ATG27 family.

The protein localises to the cytoplasmic vesicle membrane. It localises to the golgi apparatus membrane. It is found in the mitochondrion membrane. The protein resides in the preautophagosomal structure membrane. Its function is as follows. Plays a key role in autophagy. Effector of VPS34 phosphatidylinositol 3-phosphate kinase signaling. Regulates the cytoplasm to vacuole transport (Cvt) vesicle formation. Plays a role in ATG protein retrieval from the pre-autophagosomal structure (PAS) and is especially required for autophagy-dependent cycling of ATG9. Finally, plays an important role in biofilm formation and resistance to antifungal compounds such as fluconazole, itraconazole, terbinafine and caspofungin. The sequence is that of Autophagy-related protein 27 from Candida albicans (strain SC5314 / ATCC MYA-2876) (Yeast).